The primary structure comprises 234 residues: Peptidase E (234 aa).

Residues serine 123, aspartate 138, and histidine 160 each act as charge relay system in the active site.

It belongs to the peptidase S51 family.

The protein resides in the cytoplasm. It carries out the reaction Dipeptidase E catalyzes the hydrolysis of dipeptides Asp-|-Xaa. It does not act on peptides with N-terminal Glu, Asn or Gln, nor does it cleave isoaspartyl peptides.. Functionally, hydrolyzes dipeptides containing N-terminal aspartate residues. May play a role in allowing the cell to use peptide aspartate to spare carbon otherwise required for the synthesis of the aspartate family of amino acids. The polypeptide is Peptidase E (Pasteurella multocida (strain Pm70)).